Here is a 387-residue protein sequence, read N- to C-terminus: Type 2 DNA topoisomerase 6 subunit A (387 aa).

Positions 12–160 (EARKKAADTL…MLILSKEKGK (149 aa)) constitute a Topo IIA-type catalytic domain. Catalysis depends on tyrosine 106, which acts as the O-(5'-phospho-DNA)-tyrosine intermediate. Mg(2+)-binding residues include glutamate 207 and aspartate 259.

The protein belongs to the TOP6A family. In terms of assembly, homodimer. Heterotetramer of two Top6A and two Top6B chains. The cofactor is Mg(2+).

The catalysed reaction is ATP-dependent breakage, passage and rejoining of double-stranded DNA.. In terms of biological role, relaxes both positive and negative superturns and exhibits a strong decatenase activity. This chain is Type 2 DNA topoisomerase 6 subunit A, found in Sulfurisphaera tokodaii (strain DSM 16993 / JCM 10545 / NBRC 100140 / 7) (Sulfolobus tokodaii).